Consider the following 490-residue polypeptide: Cobyric acid synthase (490 aa).

The 188-residue stretch at 252 to 439 (RLKVVVPVLP…LHGLFESTAA (188 aa)) folds into the GATase cobBQ-type domain. The active-site Nucleophile is the Cys-333. The active site involves His-431.

Belongs to the CobB/CobQ family. CobQ subfamily.

It participates in cofactor biosynthesis; adenosylcobalamin biosynthesis. In terms of biological role, catalyzes amidations at positions B, D, E, and G on adenosylcobyrinic A,C-diamide. NH(2) groups are provided by glutamine, and one molecule of ATP is hydrogenolyzed for each amidation. The sequence is that of Cobyric acid synthase from Pseudomonas aeruginosa (strain ATCC 15692 / DSM 22644 / CIP 104116 / JCM 14847 / LMG 12228 / 1C / PRS 101 / PAO1).